The sequence spans 311 residues: 4-hydroxy-tetrahydrodipicolinate synthase (311 aa).

Thr-49 provides a ligand contact to pyruvate. Tyr-138 functions as the Proton donor/acceptor in the catalytic mechanism. The Schiff-base intermediate with substrate role is filled by Lys-166. Ile-207 provides a ligand contact to pyruvate.

Belongs to the DapA family. As to quaternary structure, homotetramer; dimer of dimers.

The protein resides in the cytoplasm. It catalyses the reaction L-aspartate 4-semialdehyde + pyruvate = (2S,4S)-4-hydroxy-2,3,4,5-tetrahydrodipicolinate + H2O + H(+). It functions in the pathway amino-acid biosynthesis; L-lysine biosynthesis via DAP pathway; (S)-tetrahydrodipicolinate from L-aspartate: step 3/4. Catalyzes the condensation of (S)-aspartate-beta-semialdehyde [(S)-ASA] and pyruvate to 4-hydroxy-tetrahydrodipicolinate (HTPA). This is 4-hydroxy-tetrahydrodipicolinate synthase from Limosilactobacillus fermentum (strain NBRC 3956 / LMG 18251) (Lactobacillus fermentum).